Here is a 368-residue protein sequence, read N- to C-terminus: Membrane glycoprotein UL18 (368 aa).

Positions 1-19 are cleaved as a signal peptide; sequence MMTMWCLTLFVLWMLRVVG. The chain crosses the membrane as a helical span at residues 326 to 346; sequence ISSVLLALLLCALLFAFLHYF.

Interacts with host LILRB1.

The protein resides in the host membrane. Its function is as follows. Plays a role in the protection against host NK cell cytotoxicity by interacting with and modulating the activity of the host inhibitory leukocyte Ig-like receptor 1/LILRB1, which is expressed on monocytes, dendritic cells, as well as subsets of T and NK cells. UL18 exerts an inhibitory effect on LIR-1+ NK cells, while it stimulates LIR-1- NK cell. The protein is Membrane glycoprotein UL18 (UL18) of Homo sapiens (Human).